The chain runs to 707 residues: Toxin RTX-I translocation ATP-binding protein (707 aa).

The 125-residue stretch at 1-125 folds into the Peptidase C39 domain; it reads MDFYREEDYG…SLYQGKLILV (125 aa). The active site involves His-83. The ABC transmembrane type-1 domain occupies 154-436; sequence FIETLIVSIF…LAQLWQDFQQ (283 aa). 5 helical membrane passes run 158 to 178, 188 to 208, 295 to 315, 387 to 407, and 410 to 430; these read LIVS…FQVV, FSTL…EIVL, LVIL…SPIL, VVMV…DLSI, and LIAF…LAQL. In terms of domain architecture, ABC transporter spans 468-703; that stretch reads ITFRNIRFRY…PNGLYHYLHQ (236 aa). ATP is bound at residue 502-509; the sequence is GRSGSGKS.

It belongs to the ABC transporter superfamily. Protein-1 exporter (TC 3.A.1.109) family. As to quaternary structure, homodimer.

Its subcellular location is the cell membrane. Involved in the transport of the toxin RTX-I as well as that of RTX-II. The sequence is that of Toxin RTX-I translocation ATP-binding protein (apxIB) from Actinobacillus pleuropneumoniae (Haemophilus pleuropneumoniae).